The sequence spans 199 residues: Dephospho-CoA kinase (199 aa).

The 196-residue stretch at 4–199 (VLGITGGIAT…KWLEEQIGKK (196 aa)) folds into the DPCK domain. Position 12-17 (12-17 (ATGKST)) interacts with ATP.

This sequence belongs to the CoaE family.

The protein localises to the cytoplasm. The catalysed reaction is 3'-dephospho-CoA + ATP = ADP + CoA + H(+). Its pathway is cofactor biosynthesis; coenzyme A biosynthesis; CoA from (R)-pantothenate: step 5/5. Functionally, catalyzes the phosphorylation of the 3'-hydroxyl group of dephosphocoenzyme A to form coenzyme A. The protein is Dephospho-CoA kinase of Enterococcus faecalis (strain ATCC 700802 / V583).